Reading from the N-terminus, the 3948-residue chain is Hybrid PKS-NRPS synthetase ucsA (3948 aa).

The Ketosynthase family 3 (KS3) domain occupies 11-440 (NEPIAVIGSG…GTNAHAILER (430 aa)). Active-site for beta-ketoacyl synthase activity residues include Cys184, His323, and His363. Positions 548-881 (IFTGQGAQWP…FSTAIGQLWA (334 aa)) are malonyl-CoA:ACP transacylase (MAT) domain. Residues 940–1079 (HPLLGTLGAD…GHIRLTITDF (140 aa)) are N-terminal hotdog fold. The interval 940-1254 (HPLLGTLGAD…IRLIPFAAAS (315 aa)) is dehydratase (DH) domain. The region spanning 940-1256 (HPLLGTLGAD…LIPFAAASEA (317 aa)) is the PKS/mFAS DH domain. His972 serves as the catalytic Proton acceptor; for dehydratase activity. Positions 1098-1256 (MTEVDQNLFY…LIPFAAASEA (159 aa)) are C-terminal hotdog fold. Asp1161 (proton donor; for dehydratase activity) is an active-site residue. The segment at 1299–1460 (LAHVVGQITH…LRAGFTGVET (162 aa)) is methyltransferase (MT) domain. Positions 1989–2165 (TYILFGLAGA…ASVIDIGPIS (177 aa)) are ketoreductase (KR) domain. A Carrier 1 domain is found at 2275 to 2357 (DVARVLRHAI…GLVDFAVDNL (83 aa)). An O-(pantetheine 4'-phosphoryl)serine modification is found at Ser2317. Residues 2381–2404 (PKAKTDAPAAAPTPASATAPGSKS) are compositionally biased toward low complexity. Positions 2381-2473 (PKAKTDAPAA…SSQAASLESS (93 aa)) are disordered. 2 stretches are compositionally biased toward polar residues: residues 2405–2418 (DGNV…ADQS) and 2426–2437 (PQPTAILTNATA). The segment covering 2441-2456 (PVSPSLSVTGSTSSAA) has biased composition (low complexity). Residues 2462 to 2473 (PTSSQAASLESS) are compositionally biased toward polar residues. Residues 2489 to 2926 (EKTLPMSYGQ…PQIFNSSKVQ (438 aa)) are condensation (C) domain. The interval 2950–3355 (DIAAVQPTLT…GEFVLQARIK (406 aa)) is adenylation (A) (KR) domain. The interval 3483 to 3507 (PLTNKGGLKETPVARPTRYQNDPIP) is disordered. One can recognise a Carrier 2 domain in the interval 3513–3592 (SSPFSSLDQV…QMASLLDGKD (80 aa)). Ser3552 is subject to O-(pantetheine 4'-phosphoryl)serine. Residues 3633-3852 (LTGATGFLGL…QFVPVEDVAN (220 aa)) form a reductase (R) domain region.

The protein in the C-terminal section; belongs to the NRP synthetase family.

Its pathway is mycotoxin biosynthesis. Its function is as follows. Hybrid PKS-NRPS synthetase; part of the gene cluster that mediates the biosynthesis of UCS1025A, a member of the pyrrolizidinone family that acts as a strong telomerase inhibitor and displays potent antibacterial and antitumor properties. These compounds share a hemiaminal-containing pyrrolizidinone core fused with a gamma-lactone, giving a furopyrrolizidine that is connected to a decalin fragment. The polyketide synthase module (PKS) of the PKS-NRPS ucsA is responsible for the synthesis of the polyketide backbone via the condensation of an acetyl-CoA starter unit with 6 malonyl-CoA units. The downstream nonribosomal peptide synthetase (NRPS) module then amidates the carboxyl end of the polyketide with a 2S,3S-methylproline derived from L-isoleucine by the 2-oxoglutarate-dependent dioxygenase ucsF which converts L-isoleucine to (4S,5S)-4-methylpyrroline-5-carboxylate that is further converted to 2S,3S-methylproline by the pyrroline-5-carboxylate reductase ucsG. Reductive release of the completed aminoacyl polyketide from the assembly line can form the 3-pyrrolin-2-one structure via an intramolecular Knoevenagel reaction. Because ucsA lacks a designated enoylreductase (ER) domain, the required activity is provided the enoyl reductase ucsL. This keto acyclic precursor is the substrate of the Diels-Alderase ucsH, that catalyzes the Diels-Alder cycloaddition. Oxidation of the 3S-methyl group to a carboxylate by the cytochrome P450 monooxygenase ucsK allows an oxa-Michael cyclization that might involve the reductase/dehydrogenase ucsI and which furnishes the furopyrrolizidine. The oxidase ucsJ likely plays a critical role in stereoselective reduction of the C5-C6 double bond to afford the required R-configured carboxylate group. Further enolization and oxidation at C5 by an unidentified enzyme affords the last intermediate that can undergo oxa-Michael cyclization to yield UCS1025A. The chain is Hybrid PKS-NRPS synthetase ucsA from Acremonium sp.